The following is a 125-amino-acid chain: Large ribosomal subunit protein bL19 (125 aa).

Belongs to the bacterial ribosomal protein bL19 family.

This protein is located at the 30S-50S ribosomal subunit interface and may play a role in the structure and function of the aminoacyl-tRNA binding site. In Wolbachia pipientis subsp. Culex pipiens (strain wPip), this protein is Large ribosomal subunit protein bL19.